A 334-amino-acid polypeptide reads, in one-letter code: Glycerol-3-phosphate dehydrogenase [NAD(P)+] (334 aa).

3 residues coordinate NADPH: Trp14, Arg34, and Lys107. 2 residues coordinate sn-glycerol 3-phosphate: Lys107 and Gly135. Ala139 contacts NADPH. 5 residues coordinate sn-glycerol 3-phosphate: Lys190, Asp243, Ser253, Arg254, and Asn255. The active-site Proton acceptor is the Lys190. An NADPH-binding site is contributed by Arg254. Residues Val272 and Glu273 each contribute to the NADPH site.

Belongs to the NAD-dependent glycerol-3-phosphate dehydrogenase family.

Its subcellular location is the cytoplasm. It catalyses the reaction sn-glycerol 3-phosphate + NAD(+) = dihydroxyacetone phosphate + NADH + H(+). It carries out the reaction sn-glycerol 3-phosphate + NADP(+) = dihydroxyacetone phosphate + NADPH + H(+). Its pathway is membrane lipid metabolism; glycerophospholipid metabolism. In terms of biological role, catalyzes the reduction of the glycolytic intermediate dihydroxyacetone phosphate (DHAP) to sn-glycerol 3-phosphate (G3P), the key precursor for phospholipid synthesis. The polypeptide is Glycerol-3-phosphate dehydrogenase [NAD(P)+] (Neorickettsia sennetsu (strain ATCC VR-367 / Miyayama) (Ehrlichia sennetsu)).